The following is a 29-amino-acid chain: Cyclotide psyleio C (29 aa).

A cross-link (cyclopeptide (Gly-Arg)) is located at residues 1–29 (GDLPVCGETCFGGTCNTPGCVCAWPVCTR). 3 disulfide bridges follow: Cys-6-Cys-20, Cys-10-Cys-22, and Cys-15-Cys-27.

Post-translationally, this is a cyclic peptide.

Its function is as follows. Probably participates in a plant defense mechanism. This is Cyclotide psyleio C from Psychotria leiocarpa.